The following is a 229-amino-acid chain: N-(5'-phosphoribosyl)anthranilate isomerase (229 aa).

The protein belongs to the TrpF family.

The enzyme catalyses N-(5-phospho-beta-D-ribosyl)anthranilate = 1-(2-carboxyphenylamino)-1-deoxy-D-ribulose 5-phosphate. It functions in the pathway amino-acid biosynthesis; L-tryptophan biosynthesis; L-tryptophan from chorismate: step 3/5. In Clostridium beijerinckii (strain ATCC 51743 / NCIMB 8052) (Clostridium acetobutylicum), this protein is N-(5'-phosphoribosyl)anthranilate isomerase.